Reading from the N-terminus, the 274-residue chain is MKMTIDNISEKKGVPEGIWTKCKKCDYILLQKDFEENLMVCPKCGYCTRLSARKRIEFTVDKGSFKEMDEAIQPVNFLCFPGYSDKIKKSEMSDAVVTGEAKINGYSVVIAVMDFEFMGGSMGSVVGEKIVRAIEKALKKKRHVIIISASGGARMQEGTISLMQMGKTSAALAKLADNRLAFISILTDPTTGGVAASYAMLGDINIAEPKALIGFAGPRVIEQTIRQQLSEEFQRSEFLEKHGMVDIVVERKNIRDVLTKALTFFYNRQCFLKF.

The CoA carboxyltransferase N-terminal domain maps to 18 to 274 (IWTKCKKCDY…FYNRQCFLKF (257 aa)). Zn(2+) is bound by residues Cys-22, Cys-25, Cys-41, and Cys-44. The C4-type zinc-finger motif lies at 22-44 (CKKCDYILLQKDFEENLMVCPKC).

Belongs to the AccD/PCCB family. In terms of assembly, acetyl-CoA carboxylase is a heterohexamer composed of biotin carboxyl carrier protein (AccB), biotin carboxylase (AccC) and two subunits each of ACCase subunit alpha (AccA) and ACCase subunit beta (AccD). Zn(2+) is required as a cofactor.

It is found in the cytoplasm. The enzyme catalyses N(6)-carboxybiotinyl-L-lysyl-[protein] + acetyl-CoA = N(6)-biotinyl-L-lysyl-[protein] + malonyl-CoA. It functions in the pathway lipid metabolism; malonyl-CoA biosynthesis; malonyl-CoA from acetyl-CoA: step 1/1. Component of the acetyl coenzyme A carboxylase (ACC) complex. Biotin carboxylase (BC) catalyzes the carboxylation of biotin on its carrier protein (BCCP) and then the CO(2) group is transferred by the transcarboxylase to acetyl-CoA to form malonyl-CoA. The polypeptide is Acetyl-coenzyme A carboxylase carboxyl transferase subunit beta (Endomicrobium trichonymphae).